A 546-amino-acid polypeptide reads, in one-letter code: MSLQENVIRPTANFPPSVWGDQFLTYDEREDQAGLEKVVEDLKDKVRQEILGTLDVPSQHTDLLRLIDSIQRLGIAYHFEEEIDRTLHHFYDAYGDNWTGGATSVWFRIMRQHGFFVSSDVFKSYKDKNGAFKEPLENDIVGFLELYEATYLRVPGEVILDDALVFTKGRLGEISNDPLWRNSIVSTQIIEALEQPVQKRLHRHEALRYITFYQQQASCNESLLKLAKLGFNLLQSLHKKELSQVYKWWKGFDVPTNLPYARNRMVECYFWSLSVFFEPKYSESRMFLAKVFAVETILDDTYDAFGTYEELEIFTAAVHRSSVTCLDALPKNYKLIYRIILSLYEDMEKILTKMGKAHHLNYIRNAMMEYIGCYLKEAKWANDEYTPTMEEHKEVTTVSSGYKFSLIASFAAMGDAITDETFKWALTMPPLAKACCVLCRVMDDIVTHKEEQERKHVASGIQCYMKEFDVTEQHVYDVFNAKVEDAWVEMNEESLKCKDVKRPVIMRVINLARAMDVLYKNKDHYTHVGPELINHIKSLVVDPIMA.

Residues D299, D303, D443, and E451 each coordinate Mg(2+). Residues 299-303 (DDTYD) carry the DDXXD motif motif.

The protein belongs to the terpene synthase family. Tpsa subfamily. Mg(2+) serves as cofactor. Requires Mn(2+) as cofactor. As to expression, highly expressed in roots, lower levels in stems and leaves and detected in disk florets, but not in ray florets.

The enzyme catalyses (2E,6E)-farnesyl diphosphate = (-)-alpha-isocomene + diphosphate. The protein operates within secondary metabolite biosynthesis; terpenoid biosynthesis. Functionally, sesquiterpene synthase involved in the biosynthesis of alpha-isocomene as the major product and detectable amounts of beta-caryophyllene, beta-isocomene, silphinene and modeph-2-ene. Produces exclusively the (-)-(E)-beta caryophyllene enantiomer. This Matricaria chamomilla var. recutita (German chamomile) protein is Alpha-isocomene synthase.